We begin with the raw amino-acid sequence, 174 residues long: Protein CURVATURE THYLAKOID 1B, chloroplastic (174 aa).

Residues 1-20 are disordered; the sequence is MASLSVSSSSTIIDSRAPPS. A chloroplast-targeting transit peptide spans 1–63; sequence MASLSVSSSS…RKIVRNVVTR (63 aa). Ala64 carries the N-acetylalanine modification. Topologically, residues 64–100 are stromal; sequence ATTEVGEAPATTTEAETTELPEIVKTAQEAWEKVDDK. Residues 101–121 traverse the membrane as a helical segment; sequence YAIGSLAFAGVVALWGSAGMI. The Lumenal segment spans residues 122 to 126; sequence SAIDR. Residues 127–147 form a helical membrane-spanning segment; the sequence is LPLVPGVLELVGIGYTGWFTY. The Stromal segment spans residues 148 to 174; sequence KNLVFKPDREALFEKVKSTYKDILGSS.

The protein belongs to the CURT family. In terms of assembly, homo- and heterodimers and trimers. Interacts with PSAL. Post-translationally, phosphorylated on either Thr-65 or Thr-66 by a threonine specific thylakoid kinase.

It localises to the plastid. The protein resides in the chloroplast thylakoid membrane. Its function is as follows. Determines thylakoid architecture by inducing membrane curvature. This Arabidopsis thaliana (Mouse-ear cress) protein is Protein CURVATURE THYLAKOID 1B, chloroplastic (CURT1B).